A 393-amino-acid polypeptide reads, in one-letter code: Phosphoglycerate kinase (393 aa).

Residues 21–23, R36, 59–62, R113, and R146 each bind substrate; these read DLN and HLGR. ATP is bound by residues K197, E319, and 345–348; that span reads GGDT.

The protein belongs to the phosphoglycerate kinase family. As to quaternary structure, monomer.

The protein localises to the cytoplasm. The enzyme catalyses (2R)-3-phosphoglycerate + ATP = (2R)-3-phospho-glyceroyl phosphate + ADP. It participates in carbohydrate degradation; glycolysis; pyruvate from D-glyceraldehyde 3-phosphate: step 2/5. This chain is Phosphoglycerate kinase, found in Nitratidesulfovibrio vulgaris (strain ATCC 29579 / DSM 644 / CCUG 34227 / NCIMB 8303 / VKM B-1760 / Hildenborough) (Desulfovibrio vulgaris).